The sequence spans 221 residues: Jacalin-related lectin 47 (221 aa).

Jacalin-type lectin domains follow at residues 1–64 (MDSN…YYYP) and 71–217 (SEKL…HVLP).

This sequence belongs to the jacalin lectin family.

This Arabidopsis thaliana (Mouse-ear cress) protein is Jacalin-related lectin 47 (JAL47).